Reading from the N-terminus, the 151-residue chain is Large ribosomal subunit protein bL9 (151 aa).

It belongs to the bacterial ribosomal protein bL9 family.

Binds to the 23S rRNA. The chain is Large ribosomal subunit protein bL9 from Lactobacillus acidophilus (strain ATCC 700396 / NCK56 / N2 / NCFM).